We begin with the raw amino-acid sequence, 296 residues long: Zinc finger protein 75A (296 aa).

A KRAB domain is found at 1–66; the sequence is MYFSQEEWEL…VSPEFKDSAG (66 aa). 5 C2H2-type zinc fingers span residues 161–183, 189–211, 217–239, 245–267, and 273–295; these read FKCQECGKTFRVSSDLIKHQRIH, YKCQQCDKRFRWSSDLNKHLTTH, YKCSWCGKSFSQNTNLHTHQRTH, FTCHECGKKFSQNSHLIKHRRTH, and YTCSICRRNFSRRSSLLRHQKLH.

Belongs to the krueppel C2H2-type zinc-finger protein family.

The protein localises to the nucleus. Functionally, may be involved in transcriptional regulation. The sequence is that of Zinc finger protein 75A (ZNF75A) from Homo sapiens (Human).